The following is a 153-amino-acid chain: Actin-related protein 2/3 complex subunit 5-like protein (153 aa).

Position 64 is a phosphoserine (Ser64).

The protein belongs to the ARPC5 family. In terms of assembly, may be a component of the Arp2/3 complex in which it may replace ARPC5.

The protein resides in the cytoplasm. It localises to the cytoskeleton. It is found in the cell projection. Functionally, may function as component of the Arp2/3 complex which is involved in regulation of actin polymerization and together with an activating nucleation-promoting factor (NPF) mediates the formation of branched actin networks. This is Actin-related protein 2/3 complex subunit 5-like protein (ARPC5L) from Bos taurus (Bovine).